The primary structure comprises 177 residues: uncharacterized protein (177 aa).

Positions 100-115 (QVQPHQQTHQQSQQTH) are enriched in low complexity. The interval 100 to 135 (QVQPHQQTHQQSQQTHNKTVANSGDPPPPPPSQPNK) is disordered. Residues 141-158 (WIVGMVIGVVVLYLLYRY) form a helical membrane-spanning segment.

It localises to the membrane. This is an uncharacterized protein from Aedes vexans (Inland floodwater mosquito).